Reading from the N-terminus, the 340-residue chain is DNA primase large subunit PriL (340 aa).

[4Fe-4S] cluster contacts are provided by Cys229, Cys301, Cys310, and Cys318.

It belongs to the eukaryotic-type primase large subunit family. In terms of assembly, heterodimer of a small subunit (PriS) and a large subunit (PriL). The cofactor is [4Fe-4S] cluster.

Functionally, regulatory subunit of DNA primase, an RNA polymerase that catalyzes the synthesis of short RNA molecules used as primers for DNA polymerase during DNA replication. Stabilizes and modulates the activity of the small subunit, increasing the rate of DNA synthesis, and conferring RNA synthesis capability. The DNA polymerase activity may enable DNA primase to also catalyze primer extension after primer synthesis. May also play a role in DNA repair. The sequence is that of DNA primase large subunit PriL from Thermoplasma acidophilum (strain ATCC 25905 / DSM 1728 / JCM 9062 / NBRC 15155 / AMRC-C165).